The primary structure comprises 515 residues: Carboxyl-terminal-processing peptidase 2, chloroplastic (515 aa).

In terms of domain architecture, PDZ spans 198-286; sequence FKSLRSGTQG…SAVELAIRSG (89 aa). Active-site charge relay system residues include Ser417 and Lys442.

Belongs to the peptidase S41A family.

It localises to the plastid. Its subcellular location is the chloroplast thylakoid lumen. The enzyme catalyses The enzyme shows specific recognition of a C-terminal tripeptide, Xaa-Yaa-Zaa, in which Xaa is preferably Ala or Leu, Yaa is preferably Ala or Tyr, and Zaa is preferably Ala, but then cleaves at a variable distance from the C-terminus. A typical cleavage is -Ala-Ala-|-Arg-Ala-Ala-Lys-Glu-Asn-Tyr-Ala-Leu-Ala-Ala.. Protease involved in the C-terminal processing of the chloroplastic D1 protein of photosystem II. This proteolytic processing is necessary to allow the light-driven assembly of the tetranuclear manganese cluster, which is responsible for photosynthetic water oxidation. The protein is Carboxyl-terminal-processing peptidase 2, chloroplastic (CTPA2) of Arabidopsis thaliana (Mouse-ear cress).